The chain runs to 274 residues: Large ribosomal subunit protein uL2cz/uL2cy (274 aa).

The interval 224–274 (NPVDHPHGGGEGRAPIGRKKPATPWGYPALGRRSRKRNKYSDNLILRRRSK) is disordered.

This sequence belongs to the universal ribosomal protein uL2 family. In terms of assembly, part of the 50S ribosomal subunit.

The protein resides in the plastid. The protein localises to the chloroplast. The chain is Large ribosomal subunit protein uL2cz/uL2cy (rpl2-A) from Carica papaya (Papaya).